The sequence spans 115 residues: Thioredoxin-1 (115 aa).

Residues 2 to 114 form the Thioredoxin domain; it reads LKRCNFKNQV…RQKVLEHVSA (113 aa). Residues cysteine 39 and cysteine 42 each act as nucleophile in the active site. A disulfide bond links cysteine 39 and cysteine 42.

Belongs to the thioredoxin family. Expressed in ASJ and ASI ciliated sensory neurons. Expressed in the intestine (at protein level).

Its function is as follows. Participates in various redox reactions through the reversible oxidation of its active center dithiol to a disulfide and catalyzes dithiol-disulfide exchange reactions. Shown to facilitate the reduction of insulin disulfide bonds. Might play a role in the reversible nitrosylation of cysteine residues in target proteins, and thereby contributing to the response to intracellular nitric oxide. Shapes the ASJ sensory neuron biphasic response to nitric oxide (NO) exposure; trans-nitrosylation activity might inhibit calcium flux to the cytoplasm in ASJ neurons when exposed to a NO stimulus, whereas de-nitrosylation activity might promote calcium flux when NO is diminished. By regulating the NO-induced ASJ sensory neuron activity, mediates the avoidance response to NO-producing organisms like P.aeruginosa. Positively regulates life span extension under normal and caloric restriction conditions, dauer formation and the oxidative stress response. Contributes to the down-regulation of expression of the insulin-like neuropeptide daf-28 in the ASJ neurons in a redox-independent fashion, thereby promoting dauer formation. Negatively regulates the nuclear localization of the intestinal skn-1 transcription factor in a p38 MAPK pathway-dependent and redox-independent fashion. This Caenorhabditis elegans protein is Thioredoxin-1 (trx-1).